A 149-amino-acid chain; its full sequence is Transcriptional repressor NrdR (149 aa).

A zinc finger spans residues 3–34; the sequence is CPFCSATDTKVIDSRLVAEGHQVRRRRECTEC. Positions 49 to 139 constitute an ATP-cone domain; that stretch reads PRVIKRDGSR…VYRAFEDVSE (91 aa).

Belongs to the NrdR family. The cofactor is Zn(2+).

Negatively regulates transcription of bacterial ribonucleotide reductase nrd genes and operons by binding to NrdR-boxes. This is Transcriptional repressor NrdR from Shewanella baltica (strain OS223).